We begin with the raw amino-acid sequence, 905 residues long: Protein translocase subunit SecA (905 aa).

ATP is bound by residues Gln-87, 105-109 (GEGKT), and Asp-512. The segment at 840-905 (AQRQQEAMAQ…HCHGSKARYA (66 aa)) is disordered. Low complexity predominate over residues 843-852 (QQEAMAQAES). A compositionally biased stretch (basic and acidic residues) spans 853–862 (ENYRTADHQA). Over residues 863–874 (EAQQSESLTEEQ) the composition is skewed to polar residues. The Zn(2+) site is built by Cys-886, Cys-888, Cys-897, and His-898. Over residues 892–905 (KKYKHCHGSKARYA) the composition is skewed to basic residues.

Belongs to the SecA family. In terms of assembly, monomer and homodimer. Part of the essential Sec protein translocation apparatus which comprises SecA, SecYEG and auxiliary proteins SecDF-YajC and YidC. Zn(2+) serves as cofactor.

It is found in the cell inner membrane. The protein resides in the cytoplasm. The enzyme catalyses ATP + H2O + cellular proteinSide 1 = ADP + phosphate + cellular proteinSide 2.. Functionally, part of the Sec protein translocase complex. Interacts with the SecYEG preprotein conducting channel. Has a central role in coupling the hydrolysis of ATP to the transfer of proteins into and across the cell membrane, serving both as a receptor for the preprotein-SecB complex and as an ATP-driven molecular motor driving the stepwise translocation of polypeptide chains across the membrane. The sequence is that of Protein translocase subunit SecA from Actinobacillus pleuropneumoniae serotype 3 (strain JL03).